The primary structure comprises 365 residues: tRNA/tmRNA (uracil-C(5))-methyltransferase (365 aa).

Positions 189, 217, 222, 238, and 298 each coordinate S-adenosyl-L-methionine. Cysteine 323 (nucleophile) is an active-site residue. Glutamate 357 (proton acceptor) is an active-site residue.

Belongs to the class I-like SAM-binding methyltransferase superfamily. RNA M5U methyltransferase family. TrmA subfamily.

It catalyses the reaction uridine(54) in tRNA + S-adenosyl-L-methionine = 5-methyluridine(54) in tRNA + S-adenosyl-L-homocysteine + H(+). It carries out the reaction uridine(341) in tmRNA + S-adenosyl-L-methionine = 5-methyluridine(341) in tmRNA + S-adenosyl-L-homocysteine + H(+). In terms of biological role, dual-specificity methyltransferase that catalyzes the formation of 5-methyluridine at position 54 (m5U54) in all tRNAs, and that of position 341 (m5U341) in tmRNA (transfer-mRNA). The protein is tRNA/tmRNA (uracil-C(5))-methyltransferase of Shewanella frigidimarina (strain NCIMB 400).